Reading from the N-terminus, the 227-residue chain is Glutathione S-transferase U7 (227 aa).

The GST N-terminal domain maps to 8-87; sequence EEVKLLGMWA…YIDETWRDNP (80 aa). Glutathione is bound by residues 18 to 19, 44 to 45, 58 to 59, and 71 to 72; these read SP, NK, MI, and ES. A GST C-terminal domain is found at 92–215; that stretch reads DPYERTMARF…PPEDEHLKYI (124 aa).

Belongs to the GST superfamily. Tau family.

It localises to the cytoplasm. The protein resides in the cytosol. The catalysed reaction is RX + glutathione = an S-substituted glutathione + a halide anion + H(+). May be involved in the conjugation of reduced glutathione to a wide number of exogenous and endogenous hydrophobic electrophiles and have a detoxification role against certain herbicides. The chain is Glutathione S-transferase U7 (GSTU7) from Arabidopsis thaliana (Mouse-ear cress).